We begin with the raw amino-acid sequence, 437 residues long: MARVAWGLLWLLLGSAGAQYEKYSFRGFPPEDLMPLAAAYGHALEQYEGESWRESARYLEAALRLHRLLRDSEAFCHANCSGPAPAAKPDPDGGRADEWACELRLFGRVLERAACLRRCKRTLPAFQVPYPPRQLLRDFQSRLPYQYLHYALFKANRLEKAVAAAYTFLQRNPKHELTAKYLNYYQGMLDVADESLTDLEAQPYEAVFLRAVKLYNSGDFRSSTEDMERALSEYLAVFARCLAGCEGAHEQVDFKDFYPAIADLFAESLQCKVDCEANLTPNVGGYFVDKFVATMYHYLQFAYYKLNDVRQAARSAASYMLFDPKDSVMQQNLVYYRFHRARWGLEEEDFQPREEAMLYHNQTAELRELLEFTHMYLQSDDEMELEETEPPLEPEDALSDAEFEGEGDYEEGMYADWWQEPDAKGDEAEAEPEPELA.

An N-terminal signal peptide occupies residues 1 to 18; it reads MARVAWGLLWLLLGSAGA. A glycan (N-linked (GlcNAc...) asparagine) is linked at Asn361. Composition is skewed to acidic residues over residues 381-413 and 428-437; these read DEMELEETEPPLEPEDALSDAEFEGEGDYEEGM and AEAEPEPELA. Positions 381 to 437 are disordered; the sequence is DEMELEETEPPLEPEDALSDAEFEGEGDYEEGMYADWWQEPDAKGDEAEAEPEPELA.

This sequence belongs to the leprecan family. Interacts with PLOD1, P3H3 and PPIB. Identified in a complex with PLOD1 and P3H3. Detected in fibroblasts (at protein level). Detected in spleen, prostate, testis, ovary, colon, pancreas, kidney, placenta and heart.

The protein resides in the endoplasmic reticulum. Part of a complex composed of PLOD1, P3H3 and P3H4 that catalyzes hydroxylation of lysine residues in collagen alpha chains and is required for normal assembly and cross-linking of collagen fibrils. Required for normal bone density and normal skin stability via its role in hydroxylation of lysine residues in collagen alpha chains and in collagen fibril assembly. This Homo sapiens (Human) protein is Endoplasmic reticulum protein SC65.